The chain runs to 445 residues: Questin oxidase (445 aa).

It belongs to the questin oxidase family. Requires NADPH as cofactor. As to expression, specifically expressed in conidia.

Its pathway is secondary metabolite biosynthesis. Functionally, questin oxidase; part of the gene cluster that mediates the biosynthesis of trypacidin, a mycotoxin with antiprotozoal activity and that plays a role in the infection process. The pathway begins with the synthesis of atrochrysone thioester by the polyketide synthase (PKS) tpcC. The atrochrysone carboxyl ACP thioesterase tpcB then breaks the thioester bond and releases the atrochrysone carboxylic acid from tpcC. The decarboxylase tpcK converts atrochrysone carboxylic acid to atrochrysone which is further reduced into emodin anthrone. The next step is performed by the emodin anthrone oxygenase tpcL that catalyzes the oxidation of emodinanthrone to emodin. Emodin O-methyltransferase encoded by tpcA catalyzes methylation of the 8-hydroxy group of emodin to form questin. Ring cleavage of questin by questin oxidase tpcI leads to desmethylsulochrin via several intermediates including questin epoxide. Another methylation step catalyzed by tpcM leads to the formation of sulochrin which is further converted to monomethylsulfochrin by tpcH. Finally, the tpcJ catalyzes the conversion of monomethylsulfochrin to trypacidin. Trypacidin is toxic for human pulmonary and bronchial epithelial cells by initiating the intracellular formation of nitric oxide (NO) and hydrogen peroxide (H(2)O(2)), thus triggering host necrotic cell death. The trypacidin pathway is also able to produce endocrocin via a distinct route from the endocrocin Enc pathway. The chain is Questin oxidase from Aspergillus fumigatus (strain ATCC MYA-4609 / CBS 101355 / FGSC A1100 / Af293) (Neosartorya fumigata).